A 284-amino-acid polypeptide reads, in one-letter code: Tropomyosin (284 aa).

Met-1 is subject to N-acetylmethionine. The tract at residues 1–42 (MDAIKKKMQAMKLEKDNAMDRADTLEQQNKEANNRAEKSEEE) is disordered. Residues 1–284 (MDAIKKKMQA…DQTFSELSGY (284 aa)) adopt a coiled-coil conformation. Residues 12 to 38 (KLEKDNAMDRADTLEQQNKEANNRAEK) are compositionally biased toward basic and acidic residues.

This sequence belongs to the tropomyosin family. As to quaternary structure, homodimer.

Functionally, tropomyosin, in association with the troponin complex, plays a central role in the calcium dependent regulation of muscle contraction. This Pandalus borealis (Northern red shrimp) protein is Tropomyosin.